Here is a 285-residue protein sequence, read N- to C-terminus: Tropomyosin (285 aa).

The stretch at 1–273 (MDAIKKKMQA…KEKYREIGDD (273 aa)) forms a coiled coil.

The protein belongs to the tropomyosin family. Homodimer.

Tropomyosin, in association with the troponin complex, plays a central role in the calcium dependent regulation of muscle contraction. The sequence is that of Tropomyosin from Chironomus kiiensis (Midge).